The chain runs to 312 residues: Ribosomal RNA small subunit methyltransferase H (312 aa).

Residues 33-35 (GGY), aspartate 51, phenylalanine 78, aspartate 97, and glutamine 104 each bind S-adenosyl-L-methionine.

It belongs to the methyltransferase superfamily. RsmH family.

The protein resides in the cytoplasm. It catalyses the reaction cytidine(1402) in 16S rRNA + S-adenosyl-L-methionine = N(4)-methylcytidine(1402) in 16S rRNA + S-adenosyl-L-homocysteine + H(+). In terms of biological role, specifically methylates the N4 position of cytidine in position 1402 (C1402) of 16S rRNA. The polypeptide is Ribosomal RNA small subunit methyltransferase H (Orientia tsutsugamushi (strain Ikeda) (Rickettsia tsutsugamushi)).